The primary structure comprises 891 residues: Shieldin complex subunit 2 (891 aa).

The tract at residues 1-61 is sufficient for interaction with SHLD3 and MAD2L2; sequence MSQGSQVHIF…AGDQEFKNLE (61 aa). An interaction with ASTE1 region spans residues 1–542; it reads MSQGSQVHIF…TYVSTKHSYL (542 aa). 3 disordered regions span residues 184–222, 260–294, and 333–357; these read MSTGTKPEPTGHRERQSQESFSDTRCEPQSEGAVRKASD, NMEAEPTGSQGVRRTEGDFSKPGGDFEEESENEQS, and NEENLPPNELCSSHPSTANRSWSCK. The span at 192–222 shows a compositional bias: basic and acidic residues; sequence PTGHRERQSQESFSDTRCEPQSEGAVRKASD. 2 stretches are compositionally biased toward polar residues: residues 260-271 and 342-354; these read NMEAEPTGSQGV and LCSSHPSTANRSW. The interval 695 to 866 is mediates interaction with SHLD1; it reads KYSGVVLIKA…QQDFSLLDFC (172 aa).

Belongs to the SHLD2 family. As to quaternary structure, component of the shieldin complex, consisting of SHLD1, SHLD2, SHLD3 and MAD2L2/REV7. Within the complex, SHLD2 forms a scaffold which interacts with a SHLD3-MAD2L2 subcomplex via its N-terminus, and with SHLD1 via its C-terminus. Interacts with TP53BP1. Interacts with RIF1. Interacts with ASTE1.

The protein resides in the chromosome. Functionally, component of the shieldin complex, which plays an important role in repair of DNA double-stranded breaks (DSBs). During G1 and S phase of the cell cycle, the complex functions downstream of TP53BP1 to promote non-homologous end joining (NHEJ) and suppress DNA end resection. Mediates various NHEJ-dependent processes including immunoglobulin class-switch recombination, and fusion of unprotected telomeres. This Mus musculus (Mouse) protein is Shieldin complex subunit 2.